Consider the following 303-residue polypeptide: ATP phosphoribosyltransferase (303 aa).

This sequence belongs to the ATP phosphoribosyltransferase family. Long subfamily. Mg(2+) is required as a cofactor.

The protein resides in the cytoplasm. It catalyses the reaction 1-(5-phospho-beta-D-ribosyl)-ATP + diphosphate = 5-phospho-alpha-D-ribose 1-diphosphate + ATP. It participates in amino-acid biosynthesis; L-histidine biosynthesis; L-histidine from 5-phospho-alpha-D-ribose 1-diphosphate: step 1/9. Its activity is regulated as follows. Feedback inhibited by histidine. Functionally, catalyzes the condensation of ATP and 5-phosphoribose 1-diphosphate to form N'-(5'-phosphoribosyl)-ATP (PR-ATP). Has a crucial role in the pathway because the rate of histidine biosynthesis seems to be controlled primarily by regulation of HisG enzymatic activity. The protein is ATP phosphoribosyltransferase of Haemophilus influenzae (strain PittEE).